The chain runs to 491 residues: Probable cytosol aminopeptidase (491 aa).

2 residues coordinate Mn(2+): Lys-260 and Asp-265. Lys-272 is an active-site residue. Positions 284, 343, and 345 each coordinate Mn(2+). Arg-347 is a catalytic residue.

Belongs to the peptidase M17 family. Mn(2+) serves as cofactor.

The protein resides in the cytoplasm. The catalysed reaction is Release of an N-terminal amino acid, Xaa-|-Yaa-, in which Xaa is preferably Leu, but may be other amino acids including Pro although not Arg or Lys, and Yaa may be Pro. Amino acid amides and methyl esters are also readily hydrolyzed, but rates on arylamides are exceedingly low.. The enzyme catalyses Release of an N-terminal amino acid, preferentially leucine, but not glutamic or aspartic acids.. Its function is as follows. Presumably involved in the processing and regular turnover of intracellular proteins. Catalyzes the removal of unsubstituted N-terminal amino acids from various peptides. This chain is Probable cytosol aminopeptidase, found in Rippkaea orientalis (strain PCC 8801 / RF-1) (Cyanothece sp. (strain PCC 8801)).